We begin with the raw amino-acid sequence, 173 residues long: MLNNPIIQQVLLEILGDDINGFNVLEALTELTEVTDDEISRQLDLKLNTVRKLLYKLYDARLVDYNREKDEETNWYSYTWRATFTKLPGVVKKRMEQLLIDLKEQLEVEENTLFFYCPRCEFKYSFDEAIDYGFRCSQCNGVLKEYNNKNDILMIKNQIKIIEEELALNPLFS.

Residues 3-88 (NNPIIQQVLL…TWRATFTKLP (86 aa)) form the HTH TFE/IIEalpha-type domain.

The protein belongs to the TFE family. In terms of assembly, monomer. Interaction with RNA polymerase subunits RpoF and RpoE is necessary for Tfe stimulatory transcription activity. Able to interact with Tbp and RNA polymerase in the absence of DNA promoter. Interacts both with the preinitiation and elongation complexes.

In terms of biological role, transcription factor that plays a role in the activation of archaeal genes transcribed by RNA polymerase. Facilitates transcription initiation by enhancing TATA-box recognition by TATA-box-binding protein (Tbp), and transcription factor B (Tfb) and RNA polymerase recruitment. Not absolutely required for transcription in vitro, but particularly important in cases where Tbp or Tfb function is not optimal. It dynamically alters the nucleic acid-binding properties of RNA polymerases by stabilizing the initiation complex and destabilizing elongation complexes. Seems to translocate with the RNA polymerase following initiation and acts by binding to the non template strand of the transcription bubble in elongation complexes. This chain is Transcription factor E, found in Methanococcus aeolicus (strain ATCC BAA-1280 / DSM 17508 / OCM 812 / Nankai-3).